Here is a 199-residue protein sequence, read N- to C-terminus: Pyridoxine/pyridoxamine 5'-phosphate oxidase (199 aa).

Residues 44–49, 59–60, Lys66, and Gln91 contribute to the FMN site; these read RTVLLK and YT. Lys49 lines the substrate pocket. 3 residues coordinate substrate: Tyr109, Arg113, and Ser117. Residues 126–127 and Trp171 each bind FMN; that span reads QS. 177–179 is a binding site for substrate; the sequence is RLH. Arg181 contacts FMN.

This sequence belongs to the pyridoxamine 5'-phosphate oxidase family. In terms of assembly, homodimer. Requires FMN as cofactor.

The enzyme catalyses pyridoxamine 5'-phosphate + O2 + H2O = pyridoxal 5'-phosphate + H2O2 + NH4(+). The catalysed reaction is pyridoxine 5'-phosphate + O2 = pyridoxal 5'-phosphate + H2O2. The protein operates within cofactor metabolism; pyridoxal 5'-phosphate salvage; pyridoxal 5'-phosphate from pyridoxamine 5'-phosphate: step 1/1. It participates in cofactor metabolism; pyridoxal 5'-phosphate salvage; pyridoxal 5'-phosphate from pyridoxine 5'-phosphate: step 1/1. Its function is as follows. Catalyzes the oxidation of either pyridoxine 5'-phosphate (PNP) or pyridoxamine 5'-phosphate (PMP) into pyridoxal 5'-phosphate (PLP). The protein is Pyridoxine/pyridoxamine 5'-phosphate oxidase of Xanthomonas euvesicatoria pv. vesicatoria (strain 85-10) (Xanthomonas campestris pv. vesicatoria).